The sequence spans 190 residues: Putative hydrolase YdeN (190 aa).

Residues Ser71, Asp137, and His164 each act as charge relay system in the active site.

This sequence belongs to the RBBP9 family.

This chain is Putative hydrolase YdeN (ydeN), found in Bacillus subtilis (strain 168).